A 171-amino-acid chain; its full sequence is UPF0398 protein M28_Spy1394 (171 aa).

Belongs to the UPF0398 family.

The chain is UPF0398 protein M28_Spy1394 from Streptococcus pyogenes serotype M28 (strain MGAS6180).